Consider the following 371-residue polypeptide: MSKRDYYEVLGLSKGASKDEIKKAYRRLAKKYHPDVSKEENAIEKFKEVQEAYEVLSDDQKRAQYDQFGHAGANQGFGGFGGGGDFGGGFGFEDIFSSFFGGGGGRRRDPNAPRQGADLQYQVTLEFEEAIFGKELNVEIPVEDPCDTCKGSGAKPGTSKETCKHCSGSGQVSVEQNTPFGRIVNRQACSHCSGTGQMIKEKCTTCHGSGKVRKRKKINVKIPAGIDNGQQIRVSGKGEAGVNGGPAGDLYVVVHVRSHEFFEREGDHIICEMPLTFAQMALGAEVEVPTVHGKVKLKIPAGTQTGTEFRLKGKGAPNVRGYGQGDQYVVVRVVVPTKLTSHQKDLLREFAGQEEQDDSLFGKLKRAFKGE.

One can recognise a J domain in the interval 5 to 69 (DYYEVLGLSK…QKRAQYDQFG (65 aa)). The segment at 133 to 215 (GKELNVEIPV…CHGSGKVRKR (83 aa)) adopts a CR-type zinc-finger fold. 8 residues coordinate Zn(2+): cysteine 146, cysteine 149, cysteine 163, cysteine 166, cysteine 189, cysteine 192, cysteine 203, and cysteine 206. 4 CXXCXGXG motif repeats span residues 146–153 (CDTCKGSG), 163–170 (CKHCSGSG), 189–196 (CSHCSGTG), and 203–210 (CTTCHGSG).

The protein belongs to the DnaJ family. As to quaternary structure, homodimer. Zn(2+) serves as cofactor.

It localises to the cytoplasm. Functionally, participates actively in the response to hyperosmotic and heat shock by preventing the aggregation of stress-denatured proteins and by disaggregating proteins, also in an autonomous, DnaK-independent fashion. Unfolded proteins bind initially to DnaJ; upon interaction with the DnaJ-bound protein, DnaK hydrolyzes its bound ATP, resulting in the formation of a stable complex. GrpE releases ADP from DnaK; ATP binding to DnaK triggers the release of the substrate protein, thus completing the reaction cycle. Several rounds of ATP-dependent interactions between DnaJ, DnaK and GrpE are required for fully efficient folding. Also involved, together with DnaK and GrpE, in the DNA replication of plasmids through activation of initiation proteins. In Bacillus anthracis (strain A0248), this protein is Chaperone protein DnaJ.